We begin with the raw amino-acid sequence, 271 residues long: MTAWILLPVSLSAFSITGIWTVYAMAVMNRHVCPVENWSYNESCSPDPAEQGGPKSCCTLDDVPLISKCGTYPPESCLFSLIGNMGAVMVALICLLRYGQLLEQSRHSWINTTALITGCTNAAGLVVVGNFQVDHAKSLHYIGTGVAFTAGLLFVCLHCVLFYHGATTPLDMAMAYLRSVLAVIAFITLVLSGVFFLHESSQLQHGAALCEWVFVLDILIFYGTFSYEFGTISSDTLVAALQPAPGRACKSSGSSSTSTHLNCAPESIAMI.

The Cytoplasmic portion of the chain corresponds to 1–2 (MT). The helical transmembrane segment at 3–23 (AWILLPVSLSAFSITGIWTVY) threads the bilayer. Topologically, residues 24–75 (AMAVMNRHVCPVENWSYNESCSPDPAEQGGPKSCCTLDDVPLISKCGTYPPE) are extracellular. N37 and N41 each carry an N-linked (GlcNAc...) asparagine glycan. The helical transmembrane segment at 76–96 (SCLFSLIGNMGAVMVALICLL) threads the bilayer. Over 97–108 (RYGQLLEQSRHS) the chain is Cytoplasmic. A helical transmembrane segment spans residues 109-129 (WINTTALITGCTNAAGLVVVG). Residues 130 to 140 (NFQVDHAKSLH) are Extracellular-facing. The helical transmembrane segment at 141 to 161 (YIGTGVAFTAGLLFVCLHCVL) threads the bilayer. Over 162 to 178 (FYHGATTPLDMAMAYLR) the chain is Cytoplasmic. The chain crosses the membrane as a helical span at residues 179-199 (SVLAVIAFITLVLSGVFFLHE). The Extracellular segment spans residues 200–211 (SSQLQHGAALCE). A helical membrane pass occupies residues 212–232 (WVFVLDILIFYGTFSYEFGTI). The Cytoplasmic segment spans residues 233–271 (SSDTLVAALQPAPGRACKSSGSSSTSTHLNCAPESIAMI).

It belongs to the DRAM/TMEM150 family. As to quaternary structure, interacts (via C-terminal cytoplasmic tail) with PI4KA.

The protein resides in the cell membrane. Its function is as follows. Regulates localization of phosphatidylinositol 4-kinase (PI4K) to the plasma membrane, possibly by reducing the association of TTC7 (TTC7A or TTC7B) with the PI4K complex. Acts as a regulator of phosphatidylinositol 4-phosphate (PtdIns(4)P) synthesis. May also play a role in fasting-induced catabolism. The sequence is that of Transmembrane protein 150A (Tmem150a) from Mus musculus (Mouse).